A 188-amino-acid polypeptide reads, in one-letter code: Small ribosomal subunit protein uS7 (188 aa).

This sequence belongs to the universal ribosomal protein uS7 family. Part of the 30S ribosomal subunit.

Its function is as follows. One of the primary rRNA binding proteins, it binds directly to 16S rRNA where it nucleates assembly of the head domain of the 30S subunit. Is located at the subunit interface close to the decoding center. This is Small ribosomal subunit protein uS7 from Methanococcus aeolicus (strain ATCC BAA-1280 / DSM 17508 / OCM 812 / Nankai-3).